The following is a 640-amino-acid chain: Pleckstrin homology-like domain family B member 3 (640 aa).

Disordered stretches follow at residues Met1 to Arg100, Leu162 to Arg189, Leu241 to Pro262, Gly387 to Ser412, and Arg476 to Pro504. A compositionally biased stretch (low complexity) spans Pro76 to Ser90. Residues Gln104 to Cys327 are a coiled coil. Residues Gln170–Arg189 show a composition bias toward basic and acidic residues. A coiled-coil region spans residues Asp454–Arg481. Residues Thr495–Pro504 show a composition bias toward pro residues. The PH domain maps to Gly532–Asp635.

The chain is Pleckstrin homology-like domain family B member 3 (PHLDB3) from Homo sapiens (Human).